The primary structure comprises 435 residues: Probable histidine--tRNA ligase, cytoplasmic (435 aa).

It belongs to the class-II aminoacyl-tRNA synthetase family.

The protein resides in the cytoplasm. It carries out the reaction tRNA(His) + L-histidine + ATP = L-histidyl-tRNA(His) + AMP + diphosphate + H(+). This is Probable histidine--tRNA ligase, cytoplasmic from Encephalitozoon cuniculi (strain GB-M1) (Microsporidian parasite).